We begin with the raw amino-acid sequence, 135 residues long: Small ribosomal subunit protein bS16 (135 aa).

A disordered region spans residues 94-135 (IGTEMETWQQRNDSRLKRGLDRKAIRRKRKKEAEAKEKESAG). 2 stretches are compositionally biased toward basic and acidic residues: residues 105–116 (NDSRLKRGLDRK) and 124–135 (KEAEAKEKESAG).

Belongs to the bacterial ribosomal protein bS16 family.

In Chloroherpeton thalassium (strain ATCC 35110 / GB-78), this protein is Small ribosomal subunit protein bS16.